Reading from the N-terminus, the 396-residue chain is Succinyl-CoA:mesaconate CoA-transferase (396 aa).

Residue D175 is the Nucleophile of the active site.

This sequence belongs to the CoA-transferase III family.

It carries out the reaction mesaconate + succinyl-CoA = 2-methylfumaryl-CoA + succinate. Functionally, involved in the methylaspartate cycle. Catalyzes the transfer of the CoA moiety from succinyl-CoA to mesaconate to generate mesaconyl-CoA (2-methylfumaryl-CoA) and succinate. The sequence is that of Succinyl-CoA:mesaconate CoA-transferase from Haloarcula marismortui (strain ATCC 43049 / DSM 3752 / JCM 8966 / VKM B-1809) (Halobacterium marismortui).